The following is a 160-amino-acid chain: Transcription elongation factor GreA (160 aa).

A coiled-coil region spans residues 3–84 (SIVNDKILLT…SKAKIIKADL (82 aa)).

It belongs to the GreA/GreB family.

Its function is as follows. Necessary for efficient RNA polymerase transcription elongation past template-encoded arresting sites. The arresting sites in DNA have the property of trapping a certain fraction of elongating RNA polymerases that pass through, resulting in locked ternary complexes. Cleavage of the nascent transcript by cleavage factors such as GreA or GreB allows the resumption of elongation from the new 3'terminus. GreA releases sequences of 2 to 3 nucleotides. The protein is Transcription elongation factor GreA of Mesomycoplasma hyopneumoniae (strain 7448) (Mycoplasma hyopneumoniae).